Here is a 225-residue protein sequence, read N- to C-terminus: RNA chaperone ProQ (225 aa).

Residues 103 to 173 (LEEAKARVQT…APREERHTPV (71 aa)) are disordered. Residues 109–118 (RVQTQRAAQQ) show a composition bias toward low complexity. A compositionally biased stretch (basic residues) spans 137 to 146 (RERKPRPQQP). Residues 147–156 (RRKEGAEQRK) show a composition bias toward basic and acidic residues.

Belongs to the ProQ family.

The protein resides in the cytoplasm. RNA chaperone with significant RNA binding, RNA strand exchange and RNA duplexing activities. May regulate ProP activity through an RNA-based, post-transcriptional mechanism. The sequence is that of RNA chaperone ProQ from Klebsiella pneumoniae (strain 342).